Reading from the N-terminus, the 168-residue chain is Transcription antitermination protein NusB (168 aa).

This sequence belongs to the NusB family.

In terms of biological role, involved in transcription antitermination. Required for transcription of ribosomal RNA (rRNA) genes. Binds specifically to the boxA antiterminator sequence of the ribosomal RNA (rrn) operons. In Bradyrhizobium sp. (strain ORS 278), this protein is Transcription antitermination protein NusB.